The chain runs to 242 residues: LexA repressor (242 aa).

Positions phenylalanine 26–serine 46 form a DNA-binding region, H-T-H motif. Residues serine 163 and lysine 201 each act as for autocatalytic cleavage activity in the active site.

This sequence belongs to the peptidase S24 family. Homodimer.

It catalyses the reaction Hydrolysis of Ala-|-Gly bond in repressor LexA.. Its function is as follows. Represses a number of genes involved in the response to DNA damage (SOS response), including recA and lexA. In the presence of single-stranded DNA, RecA interacts with LexA causing an autocatalytic cleavage which disrupts the DNA-binding part of LexA, leading to derepression of the SOS regulon and eventually DNA repair. This Granulibacter bethesdensis (strain ATCC BAA-1260 / CGDNIH1) protein is LexA repressor.